Here is a 192-residue protein sequence, read N- to C-terminus: UPF0149 protein Spro_3920 (192 aa).

The protein belongs to the UPF0149 family.

This Serratia proteamaculans (strain 568) protein is UPF0149 protein Spro_3920.